A 111-amino-acid chain; its full sequence is uncharacterized protein (111 aa).

This sequence to M.tuberculosis Rv1271c.

This is an uncharacterized protein from Mycobacterium bovis (strain ATCC BAA-935 / AF2122/97).